The primary structure comprises 239 residues: tRNA (guanine-N(7)-)-methyltransferase (239 aa).

S-adenosyl-L-methionine-binding positions include Gly-64, 87-88 (EI), 120-121 (NA), and Leu-140. Residue Asp-143 is part of the active site. 218–220 (SEE) lines the S-adenosyl-L-methionine pocket.

It belongs to the class I-like SAM-binding methyltransferase superfamily. TrmB family.

The protein localises to the nucleus. It catalyses the reaction guanosine(46) in tRNA + S-adenosyl-L-methionine = N(7)-methylguanosine(46) in tRNA + S-adenosyl-L-homocysteine. Its pathway is tRNA modification; N(7)-methylguanine-tRNA biosynthesis. Functionally, catalyzes the formation of N(7)-methylguanine at position 46 (m7G46) in tRNA. This chain is tRNA (guanine-N(7)-)-methyltransferase, found in Culex quinquefasciatus (Southern house mosquito).